Here is a 942-residue protein sequence, read N- to C-terminus: Isoleucine--tRNA ligase (942 aa).

The short motif at 58–68 is the 'HIGH' region element; that stretch reads PYANGDIHIGH. Residue E566 coordinates L-isoleucyl-5'-AMP. A 'KMSKS' region motif is present at residues 607 to 611; sequence KMSKS. K610 is a binding site for ATP. Residues C905, C908, C925, and C928 each coordinate Zn(2+).

It belongs to the class-I aminoacyl-tRNA synthetase family. IleS type 1 subfamily. Monomer. It depends on Zn(2+) as a cofactor.

Its subcellular location is the cytoplasm. It catalyses the reaction tRNA(Ile) + L-isoleucine + ATP = L-isoleucyl-tRNA(Ile) + AMP + diphosphate. Functionally, catalyzes the attachment of isoleucine to tRNA(Ile). As IleRS can inadvertently accommodate and process structurally similar amino acids such as valine, to avoid such errors it has two additional distinct tRNA(Ile)-dependent editing activities. One activity is designated as 'pretransfer' editing and involves the hydrolysis of activated Val-AMP. The other activity is designated 'posttransfer' editing and involves deacylation of mischarged Val-tRNA(Ile). The polypeptide is Isoleucine--tRNA ligase (Pseudoalteromonas atlantica (strain T6c / ATCC BAA-1087)).